The chain runs to 356 residues: Malate dehydrogenase, glyoxysomal (356 aa).

The transit peptide at 1 to 36 (MQPIPDVNQRIARISAHLHPPKSQMEESSALRRANC) directs the protein to the glyoxysome. NAD(+) is bound by residues 51–57 (GAAGGIG) and aspartate 77. Substrate contacts are provided by arginine 124 and arginine 130. Residues asparagine 137 and 160–162 (ISN) each bind NAD(+). Asparagine 162 and arginine 196 together coordinate substrate. Catalysis depends on histidine 220, which acts as the Proton acceptor. Methionine 271 is a binding site for NAD(+).

This sequence belongs to the LDH/MDH superfamily. MDH type 1 family. In terms of assembly, homodimer.

The protein localises to the glyoxysome. It catalyses the reaction (S)-malate + NAD(+) = oxaloacetate + NADH + H(+). This is Malate dehydrogenase, glyoxysomal from Citrullus lanatus (Watermelon).